The primary structure comprises 287 residues: MPELPEVETVRGGLAPVLEGRRLVRVEARRPDLRFPLPPGFVQILTGSTIVKLERRAKYLLGRLDREDTLVMHLGMSGRFEIAHPEGEERPGRFHYAPDPDPKHAHVVFETEAGVRITYYDPRRFGYMSLVNTATLDLHPWFAGLGPEPLSDDFDAAHLKAAFTGRRQGPKTLLLDQRIVAGLGNIYVCEALNRARISPFKPAGRISRPRIEVLVAAIKDVLREAIAAGGSTLRDYAQADGALGYFQHSFRTYDREGQPCRNDGCRGVIGREVQAGRSTFYCPVCQR.

The Schiff-base intermediate with DNA role is filled by Pro2. Residue Glu3 is the Proton donor of the active site. The Proton donor; for beta-elimination activity role is filled by Lys58. Residues His104, Arg123, and Arg166 each contribute to the DNA site. The FPG-type zinc-finger motif lies at 251 to 287 (RTYDREGQPCRNDGCRGVIGREVQAGRSTFYCPVCQR). The Proton donor; for delta-elimination activity role is filled by Arg277.

The protein belongs to the FPG family. As to quaternary structure, monomer. Zn(2+) is required as a cofactor.

It carries out the reaction Hydrolysis of DNA containing ring-opened 7-methylguanine residues, releasing 2,6-diamino-4-hydroxy-5-(N-methyl)formamidopyrimidine.. The enzyme catalyses 2'-deoxyribonucleotide-(2'-deoxyribose 5'-phosphate)-2'-deoxyribonucleotide-DNA = a 3'-end 2'-deoxyribonucleotide-(2,3-dehydro-2,3-deoxyribose 5'-phosphate)-DNA + a 5'-end 5'-phospho-2'-deoxyribonucleoside-DNA + H(+). Its function is as follows. Involved in base excision repair of DNA damaged by oxidation or by mutagenic agents. Acts as a DNA glycosylase that recognizes and removes damaged bases. Has a preference for oxidized purines, such as 7,8-dihydro-8-oxoguanine (8-oxoG). Has AP (apurinic/apyrimidinic) lyase activity and introduces nicks in the DNA strand. Cleaves the DNA backbone by beta-delta elimination to generate a single-strand break at the site of the removed base with both 3'- and 5'-phosphates. The chain is Formamidopyrimidine-DNA glycosylase from Phenylobacterium zucineum (strain HLK1).